The primary structure comprises 357 residues: Carbamoyl phosphate synthase small chain (357 aa).

Residues 1–168 (MSKRLLILED…STTTAYPSPN (168 aa)) form a CPSase region. Residues S46, G220, and G222 each coordinate L-glutamine. The Glutamine amidotransferase type-1 domain occupies 172-357 (KVVVVDFGLK…FMDLMDNFKK (186 aa)). Catalysis depends on C247, which acts as the Nucleophile. L-glutamine contacts are provided by L248, Q251, N289, G291, and Y292. Catalysis depends on residues H331 and D333.

The protein belongs to the CarA family. Composed of two chains; the small (or glutamine) chain promotes the hydrolysis of glutamine to ammonia, which is used by the large (or ammonia) chain to synthesize carbamoyl phosphate. Tetramer of heterodimers (alpha,beta)4.

It catalyses the reaction hydrogencarbonate + L-glutamine + 2 ATP + H2O = carbamoyl phosphate + L-glutamate + 2 ADP + phosphate + 2 H(+). It carries out the reaction L-glutamine + H2O = L-glutamate + NH4(+). It functions in the pathway amino-acid biosynthesis; L-arginine biosynthesis; carbamoyl phosphate from bicarbonate: step 1/1. It participates in pyrimidine metabolism; UMP biosynthesis via de novo pathway; (S)-dihydroorotate from bicarbonate: step 1/3. Functionally, small subunit of the glutamine-dependent carbamoyl phosphate synthetase (CPSase). CPSase catalyzes the formation of carbamoyl phosphate from the ammonia moiety of glutamine, carbonate, and phosphate donated by ATP, constituting the first step of 2 biosynthetic pathways, one leading to arginine and/or urea and the other to pyrimidine nucleotides. The small subunit (glutamine amidotransferase) binds and cleaves glutamine to supply the large subunit with the substrate ammonia. The sequence is that of Carbamoyl phosphate synthase small chain from Lactococcus lactis subsp. lactis (strain IL1403) (Streptococcus lactis).